The chain runs to 140 residues: Large ribosomal subunit protein uL15 (140 aa).

Residues 1–32 (MDTKKFRGSRTCGGGTHKNRRGAGNRGGRGKA) are disordered.

The protein belongs to the universal ribosomal protein uL15 family. Part of the 50S ribosomal subunit.

Binds to the 23S rRNA. This chain is Large ribosomal subunit protein uL15, found in Methanosarcina acetivorans (strain ATCC 35395 / DSM 2834 / JCM 12185 / C2A).